A 75-amino-acid polypeptide reads, in one-letter code: ATP synthase subunit c (75 aa).

Transmembrane regions (helical) follow at residues 13 to 33 (LNVVGYGLAAIGPGIGLGILI) and 54 to 74 (MFLGLAFVEVLALLGFVLAFI).

Belongs to the ATPase C chain family. F-type ATPases have 2 components, F(1) - the catalytic core - and F(0) - the membrane proton channel. F(1) has five subunits: alpha(3), beta(3), gamma(1), delta(1), epsilon(1). F(0) has three main subunits: a(1), b(2) and c(10-14). The alpha and beta chains form an alternating ring which encloses part of the gamma chain. F(1) is attached to F(0) by a central stalk formed by the gamma and epsilon chains, while a peripheral stalk is formed by the delta and b chains.

The protein resides in the cell membrane. In terms of biological role, f(1)F(0) ATP synthase produces ATP from ADP in the presence of a proton or sodium gradient. F-type ATPases consist of two structural domains, F(1) containing the extramembraneous catalytic core and F(0) containing the membrane proton channel, linked together by a central stalk and a peripheral stalk. During catalysis, ATP synthesis in the catalytic domain of F(1) is coupled via a rotary mechanism of the central stalk subunits to proton translocation. Its function is as follows. Key component of the F(0) channel; it plays a direct role in translocation across the membrane. A homomeric c-ring of between 10-14 subunits forms the central stalk rotor element with the F(1) delta and epsilon subunits. The chain is ATP synthase subunit c from Bifidobacterium adolescentis (strain ATCC 15703 / DSM 20083 / NCTC 11814 / E194a).